Consider the following 509-residue polypeptide: Ribonuclease Y (509 aa).

The chain crosses the membrane as a helical span at residues 3–23; sequence WILYVILPAVCIILGWTIRWL. One can recognise a KH domain in the interval 199-284; sequence TVSTVSLPSD…EIVQKVTREI (86 aa). Positions 325-418 constitute an HD domain; the sequence is VLQHSKEVAI…VQIADAISAA (94 aa).

The protein belongs to the RNase Y family.

The protein resides in the cell membrane. Its function is as follows. Endoribonuclease that initiates mRNA decay. This Treponema denticola (strain ATCC 35405 / DSM 14222 / CIP 103919 / JCM 8153 / KCTC 15104) protein is Ribonuclease Y.